Reading from the N-terminus, the 556-residue chain is Peptidylarginine deiminase (556 aa).

The first 23 residues, 1-23 (MKKLLQAKALILALGLFQLPAIA), serve as a signal peptide directing secretion. Residues 24–43 (QTQMQADRTNGQFATEEMQR) constitute a propeptide that is removed on maturation. C351 serves as the catalytic Amidino-cysteine intermediate.

Belongs to the agmatine deiminase family. FAD is required as a cofactor. FMN serves as cofactor.

It localises to the secreted. With respect to regulation, inhibited by cysteine and TLCK. Inhibited by high concentration of thiourea and thio-L-citrulline. Functionally, deiminates the guanidino group of C-terminal arginine residues on a variety of peptides, including the vasoregulatory peptide-hormone bradykinin, to yield ammonia and a citrulline residue. May promote the growth of the pathogen in the periodontal pocket by producing ammonia, ammonia having a protective effect during acidic cleaning cycles in the mouth. This Porphyromonas gingivalis (strain ATCC BAA-308 / W83) protein is Peptidylarginine deiminase.